The sequence spans 469 residues: 23S rRNA (uracil(1939)-C(5))-methyltransferase RlmD (469 aa).

One can recognise a TRAM domain in the interval 11-69 (PKTSNQRLTVTVDKLDMNGVGVARWQNKPIFIAGVLPDEIVDVKVIEQKSKYARAKLIS). [4Fe-4S] cluster is bound by residues cysteine 82, cysteine 88, cysteine 91, and cysteine 178. Glutamine 300, phenylalanine 329, asparagine 334, glutamate 350, aspartate 377, and aspartate 399 together coordinate S-adenosyl-L-methionine. Residue cysteine 425 is the Nucleophile of the active site.

This sequence belongs to the class I-like SAM-binding methyltransferase superfamily. RNA M5U methyltransferase family. RlmD subfamily.

It carries out the reaction uridine(1939) in 23S rRNA + S-adenosyl-L-methionine = 5-methyluridine(1939) in 23S rRNA + S-adenosyl-L-homocysteine + H(+). Functionally, catalyzes the formation of 5-methyl-uridine at position 1939 (m5U1939) in 23S rRNA. The protein is 23S rRNA (uracil(1939)-C(5))-methyltransferase RlmD of Colwellia psychrerythraea (strain 34H / ATCC BAA-681) (Vibrio psychroerythus).